The chain runs to 400 residues: Large envelope protein (400 aa).

The residue at position 1 (Met-1) is an N-acetylmethionine. 2 disordered regions span residues 1 to 20 (MGGW…SVPN) and 88 to 115 (VSTI…LRDS). Gly-2 carries N-myristoyl glycine; by host lipidation. The segment at 2–119 (GGWSSKPRKG…PPLRDSHPQA (118 aa)) is pre-S1. Residues 2-174 (GGWSSKPRKG…SARTGDPVTN (173 aa)) are pre-S. At 2–181 (GGWSSKPRKG…VTNMENITSG (180 aa)) the chain is on the virion surface; in external conformation side. At 2 to 253 (GGWSSKPRKG…PGYRWMCLRR (252 aa)) the chain is on the intravirion; in internal conformation side. The N-linked (GlcNAc...) asparagine glycan is linked to Trp-4. Polar residues predominate over residues 88–106 (VSTIPPPASTNRQSGRQPT). Residues 120–174 (MQWNSTAFHQTLQDPRVRGLYLPAGGSSSGTVNPAPNIASHISSISARTGDPVTN) are pre-S2. Residues 182–202 (FLGPLLVLQAGFFLLTRILTI) form a helical membrane-spanning segment. Topologically, residues 203–253 (PQSLDSWWTSLNFLGGSPVCLGQNSQSPTSNHSPTSCPPICPGYRWMCLRR) are intravirion; in external conformation. Residues 254–274 (FIIFLFILLLCLIFLLVLLDY) form a helical membrane-spanning segment. The Virion surface portion of the chain corresponds to 275–348 (QGMLPVCPLI…WASVRFSWLS (74 aa)). Residue Asn-320 is glycosylated (N-linked (GlcNAc...) asparagine; by host). The chain crosses the membrane as a helical span at residues 349-369 (LLVPFVQWFVGLSPTVWLSAI). The Intravirion portion of the chain corresponds to 370-375 (WMMWYW). A helical membrane pass occupies residues 376-398 (GPSLYSIVRPFIPLLPIFFCLWV). Residues 399 to 400 (YI) lie on the Virion surface side of the membrane.

The protein belongs to the orthohepadnavirus major surface antigen family. In its internal form (Li-HBsAg), interacts with the capsid protein and with the isoform S. Interacts with host chaperone CANX. As to quaternary structure, associates with host chaperone CANX through its pre-S2 N glycan; this association may be essential for isoform M proper secretion. In terms of assembly, interacts with isoform L. Interacts with the antigens of satellite virus HDV (HDVAgs); this interaction is required for encapsidation of HDV genomic RNA. In terms of processing, isoform M is N-terminally acetylated by host at a ratio of 90%, and N-glycosylated by host at the pre-S2 region. Post-translationally, myristoylated.

It localises to the virion membrane. Its function is as follows. The large envelope protein exists in two topological conformations, one which is termed 'external' or Le-HBsAg and the other 'internal' or Li-HBsAg. In its external conformation the protein attaches the virus to cell receptors and thereby initiating infection. This interaction determines the species specificity and liver tropism. This attachment induces virion internalization predominantly through caveolin-mediated endocytosis. The large envelope protein also assures fusion between virion membrane and endosomal membrane. In its internal conformation the protein plays a role in virion morphogenesis and mediates the contact with the nucleocapsid like a matrix protein. In terms of biological role, the middle envelope protein plays an important role in the budding of the virion. It is involved in the induction of budding in a nucleocapsid independent way. In this process the majority of envelope proteins bud to form subviral lipoprotein particles of 22 nm of diameter that do not contain a nucleocapsid. This Homo sapiens (Human) protein is Large envelope protein.